Reading from the N-terminus, the 375-residue chain is OVARIAN TUMOR DOMAIN-containing deubiquitinating enzyme 7 (375 aa).

The span at 1–18 (MAKTKQQKSKPKKQPHQK) shows a compositional bias: basic residues. Residues 1-23 (MAKTKQQKSKPKKQPHQKQGKDC) form a disordered region. Positions 37–161 (LKIIQVTADG…GEHYNSVRSK (125 aa)) constitute an OTU domain. The active site involves Asp45. Cys48 acts as the Nucleophile in catalysis. Residue His154 is part of the active site. Positions 202 to 250 (HVNAGAIKVVMSGSCCDNTEKAEQVLLQVNGDVDAAIEFLIADQGMESL) constitute a UBA-like domain. Polar residues-rich tracts occupy residues 251–264 (TEND…SDTI) and 290–305 (ASGN…CTTQ). Residues 251 to 306 (TENDTETASASDTINPKHASDSPMENTEQAREELIEEESASGNNSETVQAKCTTQT) form a disordered region. A Nuclear localization signal motif is present at residues 308–315 (DKKIPRNK).

It belongs to the peptidase C85 family.

It localises to the nucleus. The enzyme catalyses Thiol-dependent hydrolysis of ester, thioester, amide, peptide and isopeptide bonds formed by the C-terminal Gly of ubiquitin (a 76-residue protein attached to proteins as an intracellular targeting signal).. In terms of biological role, hydrolase that can remove conjugated ubiquitin from proteins in vitro and may therefore play an important regulatory role at the level of protein turnover by preventing degradation. Cysteine protease with a preference for 'Lys-63' over 'Lys-48' over 'Met-1' -linked ubiquitin (UB) tetramers as substrates. Also cleaves RUB-GST fusion. The protein is OVARIAN TUMOR DOMAIN-containing deubiquitinating enzyme 7 of Arabidopsis thaliana (Mouse-ear cress).